The primary structure comprises 368 residues: 3-dehydroquinate synthase (368 aa).

NAD(+)-binding positions include 76-81 (DGEQYK), 110-114 (GVIGD), 134-135 (TT), K147, K156, and 174-177 (CLKT). Zn(2+) contacts are provided by E189, H252, and H269.

The protein belongs to the sugar phosphate cyclases superfamily. Dehydroquinate synthase family. It depends on NAD(+) as a cofactor. Co(2+) is required as a cofactor. Requires Zn(2+) as cofactor.

Its subcellular location is the cytoplasm. The catalysed reaction is 7-phospho-2-dehydro-3-deoxy-D-arabino-heptonate = 3-dehydroquinate + phosphate. Its pathway is metabolic intermediate biosynthesis; chorismate biosynthesis; chorismate from D-erythrose 4-phosphate and phosphoenolpyruvate: step 2/7. Catalyzes the conversion of 3-deoxy-D-arabino-heptulosonate 7-phosphate (DAHP) to dehydroquinate (DHQ). The chain is 3-dehydroquinate synthase from Vibrio vulnificus (strain YJ016).